Consider the following 367-residue polypeptide: AA9 family lytic polysaccharide monooxygenase A (367 aa).

The N-terminal stretch at 1–20 (MKSSTFGMLALAAAAKLVSA) is a signal peptide. His-21 serves as a coordination point for Cu(2+). The segment at 37–56 (GNSESGYIRSPPSNSPITDV) is disordered. A disulfide bridge connects residues Cys-63 and Cys-183. His-102 contacts Cu(2+). His-169 provides a ligand contact to O2. Tyr-180 contacts Cu(2+). Residues 234 to 287 (GASGSSSSPSASASASAPAATSAAPAPSSFTTIAKQPATSSTEAPSTENTSTTS) are disordered. 2 stretches are compositionally biased toward low complexity: residues 235–262 (ASGS…APSS) and 270–287 (PATS…STTS). N-linked (GlcNAc...) asparagine glycosylation is present at Asn-282. Positions 329–365 (GAVKEWYQCGGLNYKGSTQCEEGLTCKKWNPYYYQCI) constitute a CBM1 domain.

Belongs to the polysaccharide monooxygenase AA9 family. Cu(2+) is required as a cofactor.

The protein localises to the secreted. It catalyses the reaction [(1-&gt;4)-beta-D-glucosyl]n+m + reduced acceptor + O2 = 4-dehydro-beta-D-glucosyl-[(1-&gt;4)-beta-D-glucosyl]n-1 + [(1-&gt;4)-beta-D-glucosyl]m + acceptor + H2O.. Lytic polysaccharide monooxygenase (LPMO) that depolymerizes crystalline and amorphous polysaccharides via the oxidation of scissile alpha- or beta-(1-4)-glycosidic bonds, yielding C4 oxidation products. Catalysis by LPMOs requires the reduction of the active-site copper from Cu(II) to Cu(I) by a reducing agent and H(2)O(2) or O(2) as a cosubstrate. Active on cellulose and cello-oligosaccharides, as well as plant cell wall-derived hemicellulosic polysaccharides. Also active on cello-oligosaccharides such as cellohexaose, cellopentaose or cellotetraose. The chain is AA9 family lytic polysaccharide monooxygenase A from Aspergillus oryzae (strain ATCC 42149 / RIB 40) (Yellow koji mold).